Reading from the N-terminus, the 364-residue chain is Putative transport protein BUsg_115 (364 aa).

9 helical membrane passes run 18–38, 40–60, 65–85, 161–181, 215–235, 243–263, 280–300, 309–329, and 331–351; these read IFII…ILGF, WASM…KFLG, VAVI…IVFL, GLFI…YWNG, ALGV…GLLI, LLMI…PILI, LLLI…PFFI, FLIL…GLFI, and PVVL…ISIA.

Belongs to the autoinducer-2 exporter (AI-2E) (TC 2.A.86) family.

Its subcellular location is the cell membrane. This chain is Putative transport protein BUsg_115, found in Buchnera aphidicola subsp. Schizaphis graminum (strain Sg).